The sequence spans 353 residues: Photosystem II protein D1 (353 aa).

The residue at position 2 (Thr-2) is an N-acetylthreonine. Thr-2 is modified (phosphothreonine). 3 helical membrane-spanning segments follow: residues 29 to 46 (YIGW…TATA), 118 to 133 (HFLL…EWEL), and 142 to 156 (WIAV…AAAA). Chlorophyll a is bound at residue His-118. Tyr-126 contributes to the pheophytin a binding site. Positions 170 and 189 each coordinate [CaMn4O5] cluster. A helical transmembrane segment spans residues 197–218 (FHMLGVAGVFGGSLFSAMHGSL). Chlorophyll a is bound at residue His-198. A quinone-binding positions include His-215 and 264–265 (SF). His-215 contributes to the Fe cation binding site. His-272 contributes to the Fe cation binding site. The helical transmembrane segment at 274–288 (FLAAWPVVGIWFTAL) threads the bilayer. [CaMn4O5] cluster is bound by residues His-332, Glu-333, Asp-342, and Ala-344. The propeptide occupies 345 to 353 (SVEAPSVNG).

The protein belongs to the reaction center PufL/M/PsbA/D family. PSII is composed of 1 copy each of membrane proteins PsbA, PsbB, PsbC, PsbD, PsbE, PsbF, PsbH, PsbI, PsbJ, PsbK, PsbL, PsbM, PsbT, PsbX, PsbY, PsbZ, Psb30/Ycf12, at least 3 peripheral proteins of the oxygen-evolving complex and a large number of cofactors. It forms dimeric complexes. The cofactor is The D1/D2 heterodimer binds P680, chlorophylls that are the primary electron donor of PSII, and subsequent electron acceptors. It shares a non-heme iron and each subunit binds pheophytin, quinone, additional chlorophylls, carotenoids and lipids. D1 provides most of the ligands for the Mn4-Ca-O5 cluster of the oxygen-evolving complex (OEC). There is also a Cl(-1) ion associated with D1 and D2, which is required for oxygen evolution. The PSII complex binds additional chlorophylls, carotenoids and specific lipids.. In terms of processing, tyr-161 forms a radical intermediate that is referred to as redox-active TyrZ, YZ or Y-Z. Post-translationally, C-terminally processed by CTPA; processing is essential to allow assembly of the oxygen-evolving complex and thus photosynthetic growth.

Its subcellular location is the plastid. The protein resides in the chloroplast thylakoid membrane. It carries out the reaction 2 a plastoquinone + 4 hnu + 2 H2O = 2 a plastoquinol + O2. Functionally, photosystem II (PSII) is a light-driven water:plastoquinone oxidoreductase that uses light energy to abstract electrons from H(2)O, generating O(2) and a proton gradient subsequently used for ATP formation. It consists of a core antenna complex that captures photons, and an electron transfer chain that converts photonic excitation into a charge separation. The D1/D2 (PsbA/PsbD) reaction center heterodimer binds P680, the primary electron donor of PSII as well as several subsequent electron acceptors. The sequence is that of Photosystem II protein D1 from Huperzia lucidula (Shining clubmoss).